Consider the following 427-residue polypeptide: Histidinol dehydrogenase (427 aa).

Residues Y125, Q186, and N209 each coordinate NAD(+). Residues S234, Q256, and H259 each coordinate substrate. Zn(2+)-binding residues include Q256 and H259. Active-site proton acceptor residues include E325 and H326. Residues H326, D359, E413, and H419 each contribute to the substrate site. D359 contributes to the Zn(2+) binding site. H419 contacts Zn(2+).

It belongs to the histidinol dehydrogenase family. The cofactor is Zn(2+).

The enzyme catalyses L-histidinol + 2 NAD(+) + H2O = L-histidine + 2 NADH + 3 H(+). It functions in the pathway amino-acid biosynthesis; L-histidine biosynthesis; L-histidine from 5-phospho-alpha-D-ribose 1-diphosphate: step 9/9. Catalyzes the sequential NAD-dependent oxidations of L-histidinol to L-histidinaldehyde and then to L-histidine. This is Histidinol dehydrogenase from Leptospira interrogans serogroup Icterohaemorrhagiae serovar copenhageni (strain Fiocruz L1-130).